Consider the following 229-residue polypeptide: Large ribosomal subunit protein uL1 (229 aa).

This sequence belongs to the universal ribosomal protein uL1 family. Part of the 50S ribosomal subunit.

Binds directly to 23S rRNA. The L1 stalk is quite mobile in the ribosome, and is involved in E site tRNA release. Its function is as follows. Protein L1 is also a translational repressor protein, it controls the translation of the L11 operon by binding to its mRNA. The sequence is that of Large ribosomal subunit protein uL1 from Pasteurella multocida (strain Pm70).